The following is a 249-amino-acid chain: 5'-nucleotidase SurE (249 aa).

A divalent metal cation-binding residues include Asp8, Asp9, Ser39, and Asn91.

It belongs to the SurE nucleotidase family. The cofactor is a divalent metal cation.

Its subcellular location is the cytoplasm. It catalyses the reaction a ribonucleoside 5'-phosphate + H2O = a ribonucleoside + phosphate. Functionally, nucleotidase that shows phosphatase activity on nucleoside 5'-monophosphates. In Haemophilus influenzae (strain PittEE), this protein is 5'-nucleotidase SurE.